A 247-amino-acid polypeptide reads, in one-letter code: DNA polymerase sliding clamp (247 aa).

The protein belongs to the PCNA family. In terms of assembly, homotrimer. The subunits circularize to form a toroid; DNA passes through its center. Replication factor C (RFC) is required to load the toroid on the DNA.

In terms of biological role, sliding clamp subunit that acts as a moving platform for DNA processing. Responsible for tethering the catalytic subunit of DNA polymerase and other proteins to DNA during high-speed replication. This is DNA polymerase sliding clamp from Methanospirillum hungatei JF-1 (strain ATCC 27890 / DSM 864 / NBRC 100397 / JF-1).